Here is a 675-residue protein sequence, read N- to C-terminus: Putative L-type lectin-domain containing receptor kinase I.11 (675 aa).

A signal peptide spans Met1–Ser22. Topologically, residues Gln23 to Pro292 are extracellular. The tract at residues Ala27–Ser263 is legume-lectin like. 5 N-linked (GlcNAc...) asparagine glycosylation sites follow: Asn60, Asn129, Asn186, Asn209, and Asn230. A helical membrane pass occupies residues Leu293 to Tyr313. Over Leu314–Arg675 the chain is Cytoplasmic. The Protein kinase domain maps to Phe348–Leu620. ATP is bound by residues Leu354–Val362 and Lys376. Asp472 acts as the Proton acceptor in catalysis.

This sequence in the C-terminal section; belongs to the protein kinase superfamily. Ser/Thr protein kinase family. It in the N-terminal section; belongs to the leguminous lectin family.

It localises to the cell membrane. The enzyme catalyses L-seryl-[protein] + ATP = O-phospho-L-seryl-[protein] + ADP + H(+). It carries out the reaction L-threonyl-[protein] + ATP = O-phospho-L-threonyl-[protein] + ADP + H(+). The protein is Putative L-type lectin-domain containing receptor kinase I.11 (LECRK111) of Arabidopsis thaliana (Mouse-ear cress).